Reading from the N-terminus, the 189-residue chain is Interferon alpha-10 (189 aa).

The first 23 residues, M1–G23, serve as a signal peptide directing secretion. 2 disulfides stabilise this stretch: C24–C122 and C52–C162.

Belongs to the alpha/beta interferon family.

It is found in the secreted. Functionally, produced by macrophages, IFN-alpha have antiviral activities. Interferon stimulates the production of two enzymes: a protein kinase and an oligoadenylate synthetase. This chain is Interferon alpha-10 (IFNA10), found in Homo sapiens (Human).